The sequence spans 239 residues: Ribosomal RNA small subunit methyltransferase G (239 aa).

Residues G78, F83, 129–130 (AE), and R148 contribute to the S-adenosyl-L-methionine site.

It belongs to the methyltransferase superfamily. RNA methyltransferase RsmG family.

Its subcellular location is the cytoplasm. Functionally, specifically methylates the N7 position of a guanine in 16S rRNA. This chain is Ribosomal RNA small subunit methyltransferase G, found in Clostridium perfringens (strain SM101 / Type A).